The primary structure comprises 868 residues: Aconitate hydratase B (868 aa).

Substrate-binding positions include R192, 235–237 (SSR), 404–406 (QDT), and S488. [4Fe-4S] cluster is bound by residues C700, C758, and C761. Positions 780 and 785 each coordinate substrate.

This sequence belongs to the aconitase/IPM isomerase family. In terms of assembly, monomer. The cofactor is [4Fe-4S] cluster.

It catalyses the reaction citrate = D-threo-isocitrate. It carries out the reaction (2S,3R)-3-hydroxybutane-1,2,3-tricarboxylate = 2-methyl-cis-aconitate + H2O. It participates in carbohydrate metabolism; tricarboxylic acid cycle; isocitrate from oxaloacetate: step 2/2. The protein operates within organic acid metabolism; propanoate degradation. Its function is as follows. Involved in the catabolism of short chain fatty acids (SCFA) via the tricarboxylic acid (TCA)(acetyl degradation route) and probably via the 2-methylcitrate cycle I (propionate degradation route). Catalyzes the reversible isomerization of citrate to isocitrate via cis-aconitate. Catalyzes the hydration of 2-methyl-cis-aconitate to yield (2R,3S)-2-methylisocitrate. The apo form of AcnB functions as a RNA-binding regulatory protein. This is Aconitate hydratase B (acnB) from Synechocystis sp. (strain ATCC 27184 / PCC 6803 / Kazusa).